Reading from the N-terminus, the 325-residue chain is Ribose-phosphate pyrophosphokinase 2 (325 aa).

96-101 (RQDKKD) provides a ligand contact to ATP. Residues Asp-135, His-137, Asp-146, and Asp-150 each coordinate Mg(2+). His-137 is a binding site for ATP. A binding of phosphoribosylpyrophosphate region spans residues 219-234 (KDRVAILVDDMADTCG).

Belongs to the ribose-phosphate pyrophosphokinase family. As to quaternary structure, homodimer. The active form is probably a hexamer composed of 3 homodimers. Mg(2+) serves as cofactor.

The enzyme catalyses D-ribose 5-phosphate + ATP = 5-phospho-alpha-D-ribose 1-diphosphate + AMP + H(+). The protein operates within metabolic intermediate biosynthesis; 5-phospho-alpha-D-ribose 1-diphosphate biosynthesis; 5-phospho-alpha-D-ribose 1-diphosphate from D-ribose 5-phosphate (route I): step 1/1. With respect to regulation, activated by magnesium and inorganic phosphate. Competitively or non-competitively inhibited by ADP, 2,3-bisphosphoglyceride or GDP. In terms of biological role, catalyzes the synthesis of phosphoribosylpyrophosphate (PRPP) that is essential for nucleotide synthesis. The polypeptide is Ribose-phosphate pyrophosphokinase 2 (PRPS2) (Gallus gallus (Chicken)).